The sequence spans 239 residues: Ribosomal RNA small subunit methyltransferase G (239 aa).

S-adenosyl-L-methionine-binding positions include Gly80, Phe85, 103-105 (EAS), 131-132 (AE), and Arg150.

It belongs to the methyltransferase superfamily. RNA methyltransferase RsmG family.

It is found in the cytoplasm. Its function is as follows. Specifically methylates the N7 position of a guanine in 16S rRNA. This Caldanaerobacter subterraneus subsp. tengcongensis (strain DSM 15242 / JCM 11007 / NBRC 100824 / MB4) (Thermoanaerobacter tengcongensis) protein is Ribosomal RNA small subunit methyltransferase G.